Consider the following 370-residue polypeptide: GTPase Obg (370 aa).

One can recognise an Obg domain in the interval 1–159 (MKFVDEAYID…KKLKLELRVL (159 aa)). Positions 160–333 (ADVGLLGMPN…LVQAIYQHVA (174 aa)) constitute an OBG-type G domain. Residues 166–173 (GMPNAGKS), 191–195 (FTTLH), 213–216 (DVPG), 283–286 (NKLD), and 314–316 (SAL) each bind GTP. Positions 173 and 193 each coordinate Mg(2+). The tract at residues 346 to 370 (FAEPEADESDDEPRFAPQADDPRFR) is disordered.

It belongs to the TRAFAC class OBG-HflX-like GTPase superfamily. OBG GTPase family. In terms of assembly, monomer. It depends on Mg(2+) as a cofactor.

It is found in the cytoplasm. Its function is as follows. An essential GTPase which binds GTP, GDP and possibly (p)ppGpp with moderate affinity, with high nucleotide exchange rates and a fairly low GTP hydrolysis rate. Plays a role in control of the cell cycle, stress response, ribosome biogenesis and in those bacteria that undergo differentiation, in morphogenesis control. The protein is GTPase Obg of Methylibium petroleiphilum (strain ATCC BAA-1232 / LMG 22953 / PM1).